Here is a 460-residue protein sequence, read N- to C-terminus: Tyrosine phenol-lyase (460 aa).

At K260 the chain carries N6-(pyridoxal phosphate)lysine.

The protein belongs to the beta-eliminating lyase family. As to quaternary structure, homotetramer. It depends on pyridoxal 5'-phosphate as a cofactor.

It carries out the reaction L-tyrosine + H2O = phenol + pyruvate + NH4(+). This is Tyrosine phenol-lyase from Fusobacterium nucleatum subsp. nucleatum (strain ATCC 25586 / DSM 15643 / BCRC 10681 / CIP 101130 / JCM 8532 / KCTC 2640 / LMG 13131 / VPI 4355).